Consider the following 464-residue polypeptide: Desmin (464 aa).

Blocked amino end (Ser) is present on serine 2. Positions 2–100 are head; that stretch reads SQSYSSSQRV…QEFLQTRTNE (99 aa). Residues serine 7 and serine 23 each carry the phosphoserine; by CDK1 modification. Threonine 65 carries the post-translational modification Phosphothreonine; by CDK1. In terms of domain architecture, IF rod spans 100 to 408; that stretch reads EKVELQELND…KLLEGEENRI (309 aa). Residues 101–133 are coil 1A; sequence KVELQELNDRFANYIEKVRFLEQQNALMVAEVN. Residues 134–143 are linker 1; the sequence is RLRGKEPTRV. Residues 144–244 form a coil 1B region; it reads AEMYEEELRE…HEEEIRELQA (101 aa). Residues 245–260 form a linker 12 region; it reads QLQEQHIQVEMDISKP. The interval 261–279 is coil 2A; it reads DLTAALRDIRAQYESIAAK. The tract at residues 280-287 is linker 2; the sequence is NIAEAEEW. The interval 288–404 is coil 2B; the sequence is YKSKVSDLTQ…ATYRKLLEGE (117 aa). Residues 405–464 are tail; that stretch reads ENRISIPMHQTFASALNFRETSPDQRGSEVHTKKTVMIKTIETRDGEVVSEATQQQHEVL.

The protein belongs to the intermediate filament family. Homomer.

It is found in the cytoplasm. The protein localises to the myofibril. The protein resides in the sarcomere. It localises to the z line. Its subcellular location is the cell membrane. It is found in the sarcolemma. In terms of biological role, muscle-specific type III intermediate filament essential for proper muscular structure and function. Plays a crucial role in maintaining the structure of sarcomeres, inter-connecting the Z-disks and forming the myofibrils, linking them not only to the sarcolemmal cytoskeleton, but also to the nucleus and mitochondria, thus providing strength for the muscle fiber during activity. In adult striated muscle they form a fibrous network connecting myofibrils to each other and to the plasma membrane from the periphery of the Z-line structures. The chain is Desmin (DES) from Gallus gallus (Chicken).